A 287-amino-acid polypeptide reads, in one-letter code: Inorganic pyrophosphatase (287 aa).

R79 lines the diphosphate pocket. Mg(2+) contacts are provided by D116, D121, and D153. Residues N244–L258 show a composition bias toward polar residues. The tract at residues N244–P269 is disordered.

It belongs to the PPase family. Requires Mg(2+) as cofactor.

The protein resides in the cytoplasm. The catalysed reaction is diphosphate + H2O = 2 phosphate + H(+). Involved in osmoadaptation. This is Inorganic pyrophosphatase (ipp1) from Emericella nidulans (strain FGSC A4 / ATCC 38163 / CBS 112.46 / NRRL 194 / M139) (Aspergillus nidulans).